Consider the following 37-residue polypeptide: Small ribosomal subunit protein eS32 (37 aa).

Belongs to the eukaryotic ribosomal protein eS32 family. Part of the small ribosomal subunit.

In terms of biological role, interacts with N(4)-acetylcytidine (ac(4)C) 1459 of the small rRNA; the acetyl group of ac(4)C1459 briges the interaction with this protein. This chain is Small ribosomal subunit protein eS32 (rpl41e), found in Thermococcus kodakarensis (strain ATCC BAA-918 / JCM 12380 / KOD1) (Pyrococcus kodakaraensis (strain KOD1)).